The primary structure comprises 497 residues: NADH-quinone oxidoreductase subunit N (497 aa).

The next 14 membrane-spanning stretches (helical) occupy residues 14–34 (LMAM…MLSI), 45–65 (SLTV…WGLF), 86–106 (IFYS…AYPW), 116–136 (EFYL…SAQH), 137–157 (LAAV…LLGY), 171–191 (YFVL…MLYA), 215–235 (ILAG…LVPF), 253–273 (FLGT…FLYV), 281–301 (LNTA…LMAL), 309–329 (LLGY…IALH), 338–358 (VAVY…VVSL), 385–405 (AAVM…LGFI), 420–439 (WVLT…YYLR), and 461–481 (AFTA…VFGI).

This sequence belongs to the complex I subunit 2 family. NDH-1 is composed of 13 different subunits. Subunits NuoA, H, J, K, L, M, N constitute the membrane sector of the complex.

Its subcellular location is the cell membrane. The enzyme catalyses a quinone + NADH + 5 H(+)(in) = a quinol + NAD(+) + 4 H(+)(out). In terms of biological role, NDH-1 shuttles electrons from NADH, via FMN and iron-sulfur (Fe-S) centers, to quinones in the respiratory chain. The immediate electron acceptor for the enzyme in this species is believed to be ubiquinone. Couples the redox reaction to proton translocation (for every two electrons transferred, four hydrogen ions are translocated across the cytoplasmic membrane), and thus conserves the redox energy in a proton gradient. The sequence is that of NADH-quinone oxidoreductase subunit N from Hamiltonella defensa subsp. Acyrthosiphon pisum (strain 5AT).